A 412-amino-acid chain; its full sequence is DnaJ homolog subfamily A member 2 (412 aa).

The region spanning 8–70 is the J domain; sequence KLYDILGVPP…EKRELYDRYG (63 aa). Lys39 bears the N6-acetyllysine mark. Ser78 and Ser123 each carry phosphoserine. Residues 130 to 214 form a CR-type zinc finger; sequence GKTTKLQLSK…CEGKKVIKEV (85 aa). Residue Lys134 forms a Glycyl lysine isopeptide (Lys-Gly) (interchain with G-Cter in SUMO2) linkage. Residues Cys143 and Cys146 each contribute to the Zn(2+) site. The CXXCXGXG motif repeat unit spans residues 143-150; it reads CSACSGQG. Lys152 carries the N6-acetyllysine modification. 6 residues coordinate Zn(2+): Cys159, Cys162, Cys186, Cys189, Cys202, and Cys205. CXXCXGXG motif repeat units follow at residues 159–166, 186–193, and 202–209; these read CSACRGRG, CSDCNGEG, and CKKCEGKK. Residues 365–412 are disordered; the sequence is IGETEEVELQEFDSTRGSGGGQRREAYNDSSDEESSSHHGPGVQCAHQ. Residue Tyr391 is modified to Phosphotyrosine. 2 positions are modified to phosphoserine: Ser394 and Ser395. At Cys409 the chain carries Cysteine methyl ester. Cys409 carries the S-farnesyl cysteine lipid modification. A propeptide spans 410–412 (removed in mature form); it reads AHQ.

It is found in the membrane. Functionally, co-chaperone of Hsc70. Stimulates ATP hydrolysis and the folding of unfolded proteins mediated by HSPA1A/B (in vitro). The polypeptide is DnaJ homolog subfamily A member 2 (DNAJA2) (Homo sapiens (Human)).